Reading from the N-terminus, the 431-residue chain is MPQLTRSAELFEKAKQFIPGGVNSPVRAFKSVGGTPIYMAKGQGAYMTDVDGNTYLDYVGSWGPFILGSMHPRITAALEHTLTKIGTSFGTPIEMEIEIAELLCQIVPSIEMVRMVNSGTEATMSAVRLARGYTSRDKIIKFEGCYHGHGDSFLIKAGSGALTLGAPDSPGVTKGTANDTLNAKYNDIESVRLLVNENKGNIAAIIIEPVAGNTGVIPAKPGFLQALRDLCTEEGIVLIFDEVMCGFRVALGGAQERYGVTPDLTTMGKIIGGGLPVGAFGGKREIMERIAPLGDVYQAGTLSGNPLALTAGLETLKILRDENPYPELERKAAFLEEGFRNNMNKLGLNYVQNRVGSMACLFFTETPVTDYDTAVTADLKKYGTYYHAMLDQGIYLAPSQFEAMFTSAVMTDEDLEKTVKANYVALQATQK.

K269 is modified (N6-(pyridoxal phosphate)lysine).

The protein belongs to the class-III pyridoxal-phosphate-dependent aminotransferase family. HemL subfamily. In terms of assembly, homodimer. Requires pyridoxal 5'-phosphate as cofactor.

The protein localises to the cytoplasm. The catalysed reaction is (S)-4-amino-5-oxopentanoate = 5-aminolevulinate. It functions in the pathway porphyrin-containing compound metabolism; protoporphyrin-IX biosynthesis; 5-aminolevulinate from L-glutamyl-tRNA(Glu): step 2/2. The protein operates within porphyrin-containing compound metabolism; chlorophyll biosynthesis. The protein is Glutamate-1-semialdehyde 2,1-aminomutase of Prosthecochloris aestuarii (strain DSM 271 / SK 413).